The chain runs to 337 residues: Heat-inducible transcription repressor HrcA (337 aa).

It belongs to the HrcA family.

In terms of biological role, negative regulator of class I heat shock genes (grpE-dnaK-dnaJ and groELS operons). Prevents heat-shock induction of these operons. This is Heat-inducible transcription repressor HrcA from Polaromonas naphthalenivorans (strain CJ2).